A 576-amino-acid polypeptide reads, in one-letter code: Arginine--tRNA ligase (576 aa).

The 'HIGH' region motif lies at 122–132 (PNVAKEMHVGH).

This sequence belongs to the class-I aminoacyl-tRNA synthetase family. In terms of assembly, monomer.

It is found in the cytoplasm. The enzyme catalyses tRNA(Arg) + L-arginine + ATP = L-arginyl-tRNA(Arg) + AMP + diphosphate. The protein is Arginine--tRNA ligase of Thermobifida fusca (strain YX).